The sequence spans 130 residues: Small ribosomal subunit protein uS11 (130 aa).

The protein belongs to the universal ribosomal protein uS11 family. As to quaternary structure, part of the 30S ribosomal subunit. Interacts with proteins S7 and S18. Binds to IF-3.

In terms of biological role, located on the platform of the 30S subunit, it bridges several disparate RNA helices of the 16S rRNA. Forms part of the Shine-Dalgarno cleft in the 70S ribosome. The protein is Small ribosomal subunit protein uS11 of Prochlorococcus marinus (strain MIT 9313).